Here is a 1538-residue protein sequence, read N- to C-terminus: Pentafunctional AROM polypeptide (1538 aa).

The 3-dehydroquinate synthase stretch occupies residues 1-384 (MGVPTKISIL…HEPRASTVSN (384 aa)). NAD(+)-binding positions include 44-46 (DTN), 81-84 (ESSK), 114-116 (GGV), and aspartate 119. Arginine 130 serves as a coordination point for 7-phospho-2-dehydro-3-deoxy-D-arabino-heptonate. Position 139 to 140 (139 to 140 (TT)) interacts with NAD(+). 2 residues coordinate 7-phospho-2-dehydro-3-deoxy-D-arabino-heptonate: aspartate 146 and lysine 152. Lysine 161 contributes to the NAD(+) binding site. A 7-phospho-2-dehydro-3-deoxy-D-arabino-heptonate-binding site is contributed by asparagine 162. NAD(+) is bound by residues 179-182 (FLNT) and asparagine 190. Zn(2+) is bound at residue glutamate 194. Residues 194 to 197 (EVIK) and lysine 250 each bind 7-phospho-2-dehydro-3-deoxy-D-arabino-heptonate. Glutamate 260 serves as the catalytic Proton acceptor; for 3-dehydroquinate synthase activity. 7-phospho-2-dehydro-3-deoxy-D-arabino-heptonate contacts are provided by residues 264–268 (RNLLN) and histidine 271. Residue histidine 271 participates in Zn(2+) binding. The active-site Proton acceptor; for 3-dehydroquinate synthase activity is the histidine 275. 2 residues coordinate 7-phospho-2-dehydro-3-deoxy-D-arabino-heptonate: histidine 287 and lysine 356. Histidine 287 serves as a coordination point for Zn(2+). The tract at residues 397–842 (VSPGVPKGLD…WDCLSQTFKV (446 aa)) is EPSP synthase. Cysteine 824 acts as the For EPSP synthase activity in catalysis. Positions 866–973 (ASIFIIGMRG…RRKQNTFFVS (108 aa)) are shikimate kinase. ATP is bound at residue 872–879 (GMRGAGKT). The tract at residues 974–1194 (LTLPDLGLAA…AAPGQLSARE (221 aa)) is 3-dehydroquinase. The active-site Proton acceptor; for 3-dehydroquinate dehydratase activity is the histidine 1097. Lysine 1125 acts as the Schiff-base intermediate with substrate; for 3-dehydroquinate dehydratase activity in catalysis. Residues 1207–1538 (AKKFAVIGNP…YEHPVLNHSS (332 aa)) form a shikimate dehydrogenase region.

It in the N-terminal section; belongs to the sugar phosphate cyclases superfamily. Dehydroquinate synthase family. In the 2nd section; belongs to the EPSP synthase family. The protein in the 3rd section; belongs to the shikimate kinase family. This sequence in the 4th section; belongs to the type-I 3-dehydroquinase family. It in the C-terminal section; belongs to the shikimate dehydrogenase family. In terms of assembly, homodimer. It depends on Zn(2+) as a cofactor.

The protein resides in the cytoplasm. The catalysed reaction is 7-phospho-2-dehydro-3-deoxy-D-arabino-heptonate = 3-dehydroquinate + phosphate. It carries out the reaction 3-dehydroquinate = 3-dehydroshikimate + H2O. It catalyses the reaction shikimate + NADP(+) = 3-dehydroshikimate + NADPH + H(+). The enzyme catalyses shikimate + ATP = 3-phosphoshikimate + ADP + H(+). The catalysed reaction is 3-phosphoshikimate + phosphoenolpyruvate = 5-O-(1-carboxyvinyl)-3-phosphoshikimate + phosphate. The protein operates within metabolic intermediate biosynthesis; chorismate biosynthesis; chorismate from D-erythrose 4-phosphate and phosphoenolpyruvate: step 2/7. Its pathway is metabolic intermediate biosynthesis; chorismate biosynthesis; chorismate from D-erythrose 4-phosphate and phosphoenolpyruvate: step 3/7. It participates in metabolic intermediate biosynthesis; chorismate biosynthesis; chorismate from D-erythrose 4-phosphate and phosphoenolpyruvate: step 4/7. It functions in the pathway metabolic intermediate biosynthesis; chorismate biosynthesis; chorismate from D-erythrose 4-phosphate and phosphoenolpyruvate: step 5/7. The protein operates within metabolic intermediate biosynthesis; chorismate biosynthesis; chorismate from D-erythrose 4-phosphate and phosphoenolpyruvate: step 6/7. Its function is as follows. The AROM polypeptide catalyzes 5 consecutive enzymatic reactions in prechorismate polyaromatic amino acid biosynthesis. The polypeptide is Pentafunctional AROM polypeptide (Ajellomyces capsulatus (strain NAm1 / WU24) (Darling's disease fungus)).